Here is a 275-residue protein sequence, read N- to C-terminus: Large ribosomal subunit protein uL2c (275 aa).

The tract at residues 225-259 (KNPVDHPHGGGEGRAPIGRSTPVTPWGKPALGRRT) is disordered.

It belongs to the universal ribosomal protein uL2 family. Part of the 50S ribosomal subunit.

It localises to the plastid. It is found in the cyanelle. The chain is Large ribosomal subunit protein uL2c (rpl2) from Cyanophora paradoxa.